The sequence spans 509 residues: Phytase A (509 aa).

Residues 1 to 15 (MFLLMVPLFSYLAAA) form the signal peptide. A disulfide bond links Cys27 and Cys36. Positions 46, 47, 75, 76, 79, 82, and 164 each coordinate 1D-myo-inositol hexakisphosphate. Disulfide bonds link Cys65–Cys444, Cys216–Cys507, Cys266–Cys295, and Cys478–Cys486. His76 serves as the catalytic Nucleophile. N-linked (GlcNAc...) asparagine glycans are attached at residues Asn171 and Asn208. A 1D-myo-inositol hexakisphosphate-binding site is contributed by Lys314. Asn348, Asn352, and Asn367 each carry an N-linked (GlcNAc...) asparagine glycan. Residues His376 and Asp377 each coordinate 1D-myo-inositol hexakisphosphate. N-linked (GlcNAc...) asparagine glycosylation is present at Asn401.

This sequence belongs to the histidine acid phosphatase family. Monomer.

It is found in the secreted. It catalyses the reaction 1D-myo-inositol hexakisphosphate + H2O = 1D-myo-inositol 1,2,4,5,6-pentakisphosphate + phosphate. It carries out the reaction 1D-myo-inositol 1,2,4,5,6-pentakisphosphate + H2O = 1D-myo-inositol 1,2,5,6-tetrakisphosphate + phosphate. The enzyme catalyses 1D-myo-inositol 1,2,5,6-tetrakisphosphate + H2O = 1D-myo-inositol 1,2,6-trisphosphate + phosphate. The catalysed reaction is 1D-myo-inositol 1,2,6-trisphosphate + H2O = 1D-myo-inositol 1,2-bisphosphate + phosphate. It catalyses the reaction 1D-myo-inositol 1,2-bisphosphate + H2O = 1D-myo-inositol 2-phosphate + phosphate. Catalyzes the phosphate monoester hydrolysis of phytic acid (myo-inositol hexakisphosphate), which results in the stepwise formation of myo-inositol pentakis-, tetrakis-, tris-, bis-, and monophosphates, as well as the liberation of inorganic phosphate. Myo-inositol 2-monophosphate is the end product. Is also able to dephosphorylate the classic acid phosphatase substrate p-nitrophenyl phosphate. The polypeptide is Phytase A (pht-1) (Neurospora crassa (strain ATCC 24698 / 74-OR23-1A / CBS 708.71 / DSM 1257 / FGSC 987)).